The chain runs to 421 residues: Ribosomal RNA large subunit methyltransferase G (421 aa).

Residues 389–421 (EPELEQESDLNSKLDANTEVPHPQSALYGKPKA) form a disordered region.

It belongs to the methyltransferase superfamily. RlmG family.

The protein resides in the cytoplasm. The catalysed reaction is guanosine(1835) in 23S rRNA + S-adenosyl-L-methionine = N(2)-methylguanosine(1835) in 23S rRNA + S-adenosyl-L-homocysteine + H(+). In terms of biological role, specifically methylates the guanine in position 1835 (m2G1835) of 23S rRNA. This chain is Ribosomal RNA large subunit methyltransferase G, found in Shewanella halifaxensis (strain HAW-EB4).